The chain runs to 500 residues: Probable cytosol aminopeptidase 1 (500 aa).

Mn(2+)-binding residues include K263 and D268. The active site involves K275. Mn(2+) contacts are provided by D287, D346, and E348. R350 is a catalytic residue.

This sequence belongs to the peptidase M17 family. Requires Mn(2+) as cofactor.

It is found in the cytoplasm. It catalyses the reaction Release of an N-terminal amino acid, Xaa-|-Yaa-, in which Xaa is preferably Leu, but may be other amino acids including Pro although not Arg or Lys, and Yaa may be Pro. Amino acid amides and methyl esters are also readily hydrolyzed, but rates on arylamides are exceedingly low.. The enzyme catalyses Release of an N-terminal amino acid, preferentially leucine, but not glutamic or aspartic acids.. In terms of biological role, presumably involved in the processing and regular turnover of intracellular proteins. Catalyzes the removal of unsubstituted N-terminal amino acids from various peptides. The polypeptide is Probable cytosol aminopeptidase 1 (pepA1) (Shewanella oneidensis (strain ATCC 700550 / JCM 31522 / CIP 106686 / LMG 19005 / NCIMB 14063 / MR-1)).